A 293-amino-acid chain; its full sequence is Pyridoxal 5'-phosphate synthase subunit PdxS (293 aa).

A D-ribose 5-phosphate-binding site is contributed by Asp-23. Lys-80 functions as the Schiff-base intermediate with D-ribose 5-phosphate in the catalytic mechanism. Gly-152 is a D-ribose 5-phosphate binding site. Arg-164 provides a ligand contact to D-glyceraldehyde 3-phosphate. D-ribose 5-phosphate contacts are provided by residues Gly-213 and 234–235 (GS).

Belongs to the PdxS/SNZ family. As to quaternary structure, in the presence of PdxT, forms a dodecamer of heterodimers.

The enzyme catalyses aldehydo-D-ribose 5-phosphate + D-glyceraldehyde 3-phosphate + L-glutamine = pyridoxal 5'-phosphate + L-glutamate + phosphate + 3 H2O + H(+). It participates in cofactor biosynthesis; pyridoxal 5'-phosphate biosynthesis. Functionally, catalyzes the formation of pyridoxal 5'-phosphate from ribose 5-phosphate (RBP), glyceraldehyde 3-phosphate (G3P) and ammonia. The ammonia is provided by the PdxT subunit. Can also use ribulose 5-phosphate and dihydroxyacetone phosphate as substrates, resulting from enzyme-catalyzed isomerization of RBP and G3P, respectively. This is Pyridoxal 5'-phosphate synthase subunit PdxS from Thermus thermophilus (strain ATCC 27634 / DSM 579 / HB8).